A 253-amino-acid chain; its full sequence is Complement C1q subcomponent subunit B (253 aa).

Positions 1–25 are cleaved as a signal peptide; the sequence is MKTQWSEILTPLLLLLLGLLHVSWA. Position 26 is a pyrrolidone carboxylic acid (glutamine 26). The region spanning 29–112 is the Collagen-like domain; that stretch reads CTGSPGIPGV…GPRGPKGGSG (84 aa). Residues 29 to 114 form a disordered region; sequence CTGSPGIPGV…RGPKGGSGDY (86 aa). Proline 33, proline 36, proline 39, proline 51, and proline 54 each carry 4-hydroxyproline. Residues lysine 57 and lysine 60 each carry the 5-hydroxylysine modification. 4-hydroxyproline is present on proline 63. Positions 68 to 77 are enriched in basic and acidic residues; sequence DHGELGEKGD. Lysine 75 is modified (5-hydroxylysine). The span at 78 to 96 shows a compositional bias: low complexity; the sequence is AGIPGIPGKVGPKGPVGPK. Residues proline 81 and proline 84 each carry the 4-hydroxyproline modification. 5-hydroxylysine occurs at positions 90 and 96. 4-hydroxyproline is present on residues proline 99 and proline 102. Lysine 108 bears the 5-hydroxylysine mark. Residues 115-253 form the C1q domain; sequence KATQKVAFSA…GFLLFPDMDV (139 aa). Cysteines 179 and 198 form a disulfide. The Ca(2+) site is built by aspartate 199, tyrosine 200, and glutamine 206.

As to quaternary structure, core component of the complement C1 complex, a calcium-dependent complex composed of 1 molecule of the C1Q subcomplex, 2 molecules of C1R and 2 molecules of C1S. The C1Q subcomplex is composed 18 subunits: 3 chains of C1QA, C1QB, and C1QC trimerize to form 6 collagen-like triple helices connected to six globular ligand-recognition modules (C1q domain). Hydroxylated on lysine and proline residues. Hydroxylated lysine residues can be glycosylated. Human C1Q contains up to 68.3 hydroxylysine-galactosylglucose residues and up to 2.5 hydroxylysine-galactose per molecule. Total percentage hydroxylysine residues glycosylated is 86.4%. As to expression, highest levels in spleen, lung and brain. Weaker expression in kidney and liver. In the spleen, localized mainly to the red pulp, in cells mainly of monocyte-macrophage lineage. In white pulp, localized in specific dendritic cells such as those from the periarteriolar lymphatic sheath (PALS).

Its subcellular location is the secreted. It is found in the cell surface. With respect to regulation, the C1Q subcomplex is inhibited by sulfated molecules, such as triterpenoid sulfates, heparan sulfate, or chondroitin sulfates. In terms of biological role, core component of the complement C1 complex, a multiprotein complex that initiates the classical pathway of the complement system, a cascade of proteins that leads to phagocytosis and breakdown of pathogens and signaling that strengthens the adaptive immune system. The classical complement pathway is initiated by the C1Q subcomplex of the C1 complex, which specifically binds IgG or IgM immunoglobulins complexed with antigens, forming antigen-antibody complexes on the surface of pathogens: C1QA, together with C1QB and C1QC, specifically recognizes and binds the Fc regions of IgG or IgM via its C1q domain. Immunoglobulin-binding activates the proenzyme C1R, which cleaves C1S, initiating the proteolytic cascade of the complement system. The C1Q subcomplex is activated by a hexamer of IgG complexed with antigens, while it is activated by a pentameric IgM. The C1Q subcomplex also recognizes and binds phosphatidylserine exposed on the surface of cells undergoing programmed cell death, possibly promoting activation of the complement system. The protein is Complement C1q subcomponent subunit B of Rattus norvegicus (Rat).